The chain runs to 77 residues: Small ribosomal subunit protein bS18 (77 aa).

This sequence belongs to the bacterial ribosomal protein bS18 family. In terms of assembly, part of the 30S ribosomal subunit. Forms a tight heterodimer with protein bS6.

Binds as a heterodimer with protein bS6 to the central domain of the 16S rRNA, where it helps stabilize the platform of the 30S subunit. This chain is Small ribosomal subunit protein bS18, found in Bacillus thuringiensis subsp. konkukian (strain 97-27).